The primary structure comprises 1037 residues: Receptor kinase-like protein Xa21 (1037 aa).

The signal sequence occupies residues 1–24 (MARSPTSVMISSLLLLLLIGPASS). The Extracellular segment spans residues 25 to 665 (DDAAAAAAAR…LLENRKHFPV (641 aa)). N-linked (GlcNAc...) asparagine glycans are attached at residues Asn66, Asn101, and Asn112. LRR repeat units follow at residues 89 to 112 (PHRV…SLGN), 113 to 137 (LSFL…LSRL), 138 to 161 (SRLQ…IGAC), 163 to 185 (KLTS…IGAS), 187 to 210 (KHLS…LGNL), 211 to 234 (TSLQ…LGQL), 236 to 259 (SSLL…IWNL), 260 to 283 (SSLR…AFKT), 285 to 308 (HLLE…VANA), 310 to 331 (HLTQ…GFGR), and 333 to 355 (RNLT…DWGF). The N-linked (GlcNAc...) asparagine glycan is linked to Asn209. Residues Asn247 and Asn258 are each glycosylated (N-linked (GlcNAc...) asparagine). Residue Asn307 is glycosylated (N-linked (GlcNAc...) asparagine). Residues Asn334, Asn361, and Asn385 are each glycosylated (N-linked (GlcNAc...) asparagine). LRR repeat units follow at residues 362–385 (CSKL…SFSN), 387–411 (STSL…IGNL), 412–435 (IGLQ…LGRL), 437–459 (NLGI…IGNL), 460–482 (TELN…TLSN), 483–507 (LTNL…LFNI), 509–532 (TLSI…IGHL), 533–556 (KNLV…LGDC), 557–580 (QLLR…LGQL), 581–604 (KGLE…LADI), and 606–629 (MLHS…AFAD). Asn447, Asn458, Asn482, Asn495, and Asn515 each carry an N-linked (GlcNAc...) asparagine glycan. 2 N-linked (GlcNAc...) asparagine glycosylation sites follow: Asn592 and Asn611. The chain crosses the membrane as a helical span at residues 666-686 (LPISVSLVAALAILSSLYLLI). The Cytoplasmic portion of the chain corresponds to 687–1037 (TWHKRTKKGA…PVCEGASLEF (351 aa)). The Nuclear localization signal motif lies at 689 to 694 (HKRTKK). The residue at position 698 (Ser698) is a Phosphoserine. Phosphothreonine is present on Thr700. Ser701 is modified (phosphoserine). Thr717 is modified (phosphothreonine). Residues 720-1019 (FAPTNLLGSG…GDIIDELNAI (300 aa)) form the Protein kinase domain. ATP contacts are provided by residues 726–734 (LGSGSFGSV) and Lys748. Catalysis depends on Asp854, which acts as the Proton acceptor.

This sequence belongs to the protein kinase superfamily. Ser/Thr protein kinase family. In terms of assembly, interacts with WRKY62/XB10 in the nucleus. Interacts with SERK2. Mn(2+) serves as cofactor. It depends on Mg(2+) as a cofactor. In terms of processing, undergoes protein cleavage upon X.oryzae pv. oryzae protein Ax21 detection, thus releasing the processed protein kinase Xa21 chain. Post-translationally, autophosphorylated on serine and threonine residues; these phosphorylation prevents proteolytic degradation.

The protein resides in the cell membrane. It localises to the endoplasmic reticulum membrane. Its subcellular location is the nucleus. It carries out the reaction L-seryl-[protein] + ATP = O-phospho-L-seryl-[protein] + ADP + H(+). It catalyses the reaction L-threonyl-[protein] + ATP = O-phospho-L-threonyl-[protein] + ADP + H(+). Functionally, receptor kinase that detects X.oryzae pv. oryzae protein Ax21 to promote innate immunity. Following X.oryzae pv. oryzae protein Ax21 detection, undergoes cleavage, releasing the processed protein kinase Xa21 chain. The processed protein kinase Xa21 chain released by protein cleavage after X.oryzae pv. oryzae protein Ax21 detection translocates into the nucleus where it can bind and regulate WRKY62, a transcription factor. Confers resistance to the bacterial pathogen X.oryzae pv. oryzae (Xoo). The sequence is that of Receptor kinase-like protein Xa21 from Oryza sativa subsp. japonica (Rice).